Here is a 187-residue protein sequence, read N- to C-terminus: uncharacterized protein (187 aa).

The protein belongs to the isochorismatase family.

This is an uncharacterized protein from Bacillus subtilis (strain 168).